The sequence spans 326 residues: DNA-directed RNA polymerase subunit alpha (326 aa).

An alpha N-terminal domain (alpha-NTD) region spans residues Met1–Glu232. The tract at residues Phe246–Glu326 is alpha C-terminal domain (alpha-CTD).

The protein belongs to the RNA polymerase alpha chain family. Homodimer. The RNAP catalytic core consists of 2 alpha, 1 beta, 1 beta' and 1 omega subunit. When a sigma factor is associated with the core the holoenzyme is formed, which can initiate transcription.

It catalyses the reaction RNA(n) + a ribonucleoside 5'-triphosphate = RNA(n+1) + diphosphate. DNA-dependent RNA polymerase catalyzes the transcription of DNA into RNA using the four ribonucleoside triphosphates as substrates. The polypeptide is DNA-directed RNA polymerase subunit alpha (Vesicomyosocius okutanii subsp. Calyptogena okutanii (strain HA)).